A 266-amino-acid chain; its full sequence is Proteasome subunit beta type-7 (266 aa).

A propeptide spanning residues 1-33 is cleaved from the precursor; it reads MNHDPFSWGRPADSTYGAYNTQIANAGASPMVN.

This sequence belongs to the peptidase T1B family. In terms of assembly, the 26S proteasome consists of a 20S proteasome core and two 19S regulatory subunits. The 20S proteasome core is composed of 28 subunits that are arranged in four stacked rings, resulting in a barrel-shaped structure. The two end rings are each formed by seven alpha subunits, and the two central rings are each formed by seven beta subunits. The catalytic chamber with the active sites is on the inside of the barrel. Interacts with CIC1.

Its subcellular location is the cytoplasm. The protein localises to the nucleus. Its function is as follows. Non-catalytic component of the proteasome which degrades poly-ubiquitinated proteins in the cytoplasm and in the nucleus. It is essential for the regulated turnover of proteins and for the removal of misfolded proteins. The proteasome is a multicatalytic proteinase complex that is characterized by its ability to cleave peptides with Arg, Phe, Tyr, Leu, and Glu adjacent to the leaving group at neutral or slightly basic pH. It has an ATP-dependent proteolytic activity. PRE3 and PRE4 are necessary for the peptidyl-glutamyl-peptide-hydrolyzing activity. The chain is Proteasome subunit beta type-7 (PRE4) from Saccharomyces cerevisiae (strain ATCC 204508 / S288c) (Baker's yeast).